A 229-amino-acid chain; its full sequence is Type III pantothenate kinase (229 aa).

6–13 provides a ligand contact to ATP; that stretch reads NIGNSRQH. Residues Tyr77 and 81-84 each bind substrate; that span reads GIDR. Catalysis depends on Asp83, which acts as the Proton acceptor. Asp103 contributes to the K(+) binding site. ATP is bound at residue Thr106. Substrate is bound at residue Thr159.

It belongs to the type III pantothenate kinase family. In terms of assembly, homodimer. Requires NH4(+) as cofactor. The cofactor is K(+).

The protein resides in the cytoplasm. It carries out the reaction (R)-pantothenate + ATP = (R)-4'-phosphopantothenate + ADP + H(+). It participates in cofactor biosynthesis; coenzyme A biosynthesis; CoA from (R)-pantothenate: step 1/5. In terms of biological role, catalyzes the phosphorylation of pantothenate (Pan), the first step in CoA biosynthesis. In Gloeobacter violaceus (strain ATCC 29082 / PCC 7421), this protein is Type III pantothenate kinase.